The chain runs to 710 residues: Early transcription factor 82 kDa subunit (710 aa).

Belongs to the poxviridae VETF large subunit family. Heterodimer of a 70 kDa and a 82 kDa subunit. Part of the early transcription complex composed of ETF, RAP94/OPG109, and the DNA-directed RNA polymerase.

It localises to the virion. Its function is as follows. Acts with RNA polymerase to initiate transcription from early gene promoters. Is recruited by the RPO-associated protein of 94 kDa RAP94/OPG109 to form the early transcription complex, which also contains the core RNA polymerase. ETF heterodimer binds to early gene promoters. This is Early transcription factor 82 kDa subunit (OPG133) from Homo sapiens (Human).